The chain runs to 585 residues: MAEAGTGFLEQLKSCIVWSWTYLWTVWFFIVLFLVYILRVPLKINDNLSTVSMFLNTLTPKFYVALTGTSSLISGLILIFEWWYFRKYGTSFIEQVSVSHLRPLLGGVDNNSSNNSNSSNGDSDSNRQSVSECKVWRNPLNLFRGAEYNRYTWVTGREPLTYYDMNLSAQDHQTFFTCDSDHMRPADAIMQKAWRERNPQARISAAHEALEINEIRSRVEVPLIASSTIWEIKLLPKCATAYILLAEEEATTIAEAEKLFKQALKAGDGCYRRSQQLQHHGSQYEAQHRRDTNVLVYIKRRLAMCARRLGRTREAVKMMRDLMKEFPLLSMFNIHENLLEALLELQAYADVQAVLAKYDDISLPKSATICYTAALLKARAVSDKFSPEAASRRGLSTAEMNAVEAIHRAVEFNPHVPKYLLEMKSLILPPEHILKRGDSEAIAYAFFHLAHWKRVEGALNLLHCTWEGTFRMIPYPLEKGHLFYPYPICTETADRELLPSFHEVSVYPKKELPFFILFTAGLCSFTAMLALLTHQFPELMGVFAKAMIDIFCSAEFRDWNCKSIFMRVEDELDIPPAPQSQHFQN.

A helical transmembrane segment spans residues 15 to 35 (CIVWSWTYLWTVWFFIVLFLV). N47 is a glycosylation site (N-linked (GlcNAc...) asparagine). A helical transmembrane segment spans residues 62-82 (FYVALTGTSSLISGLILIFEW). At S386 the chain carries Phosphoserine. A helical membrane pass occupies residues 512–532 (LPFFILFTAGLCSFTAMLALL).

Belongs to the ST7 family.

The protein localises to the membrane. In Loxodonta africana (African elephant), this protein is Suppressor of tumorigenicity 7 protein (ST7).